The following is a 345-amino-acid chain: MKLQGSRMWLCPRTRLPVGASALGFLILCWLYVFPGYRLPGHKEMVREVLRFGPGWRKNRTEMDSFRKLLQDCCDPPHLFSLTKVNTPLGENLWFDGEFFHSLTIDNSTRSLFPQDTPFKLPLKRCSVVGNGGILKNSRCGEQIDEADFVMRCNLPPLSREYTEDVGTRTQLVTVNPSIIDKRYQNLLWSRKSFVENLRVYQQSYVYMPAFSTKRGTDPSLRVYYTLADFGTNQTVLFANPNFLRNVGKFWKSRGIHSKRLSTGLFMVSAALSLCEEVTIYGFWPFQMDLGGRYISHHYYDNTLPLSGVHAMPEEFLQLWLLHKSGVLQMQLDQCKKDVSSQKPH.

Residues 1–15 are Cytoplasmic-facing; the sequence is MKLQGSRMWLCPRTR. The helical; Signal-anchor for type II membrane protein transmembrane segment at 16–36 threads the bilayer; sequence LPVGASALGFLILCWLYVFPG. The Lumenal portion of the chain corresponds to 37-345; sequence YRLPGHKEMV…KKDVSSQKPH (309 aa). N-linked (GlcNAc...) asparagine glycans are attached at residues Asn59 and Asn107. Cystine bridges form between Cys126–Cys275 and Cys140–Cys335. 2 residues coordinate CMP-N-acetyl-beta-neuraminate: Asn131 and Asn154. Substrate is bound by residues Asn154 and 176 to 178; that span reads NPS. N-linked (GlcNAc...) asparagine glycosylation occurs at Asn233. CMP-N-acetyl-beta-neuraminate is bound by residues Ser262, Thr263, Gly264, Trp284, and His298. A substrate-binding site is contributed by 262–264; that stretch reads STG. The Proton donor/acceptor role is filled by His310.

Belongs to the glycosyltransferase 29 family.

It localises to the golgi apparatus membrane. The catalysed reaction is an N-acetyl-alpha-neuraminyl-(2-&gt;3)-beta-D-galactosyl derivative + CMP-N-acetyl-beta-neuraminate = an N-acetyl-alpha-neuraminyl-(2-&gt;8)-N-acetyl-alpha-neuraminyl-(2-&gt;3)-beta-D-galactosyl derivative + CMP + H(+). The enzyme catalyses a ganglioside GM3 (d18:1(4E)) + CMP-N-acetyl-beta-neuraminate = a ganglioside GD3 (d18:1(4E)) + CMP + H(+). It catalyses the reaction a ganglioside GD3 (d18:1(4E)) + CMP-N-acetyl-beta-neuraminate = a ganglioside GT3 (d18:1(4E)) + CMP + H(+). It carries out the reaction a ganglioside GD1a (d18:1(4E)) + CMP-N-acetyl-beta-neuraminate = a ganglioside GT1a (d18:1(4E)) + CMP + H(+). The catalysed reaction is a ganglioside GT1b (d18:1(4E)) + CMP-N-acetyl-beta-neuraminate = a ganglioside GQ1b (d18:1(4E)) + CMP + H(+). The enzyme catalyses a ganglioside GM1b (d18:1(4E)) + CMP-N-acetyl-beta-neuraminate = a ganglioside GD1c (d18:1(4E)) + CMP + H(+). It catalyses the reaction a ganglioside GD3 + CMP-N-acetyl-beta-neuraminate = a ganglioside GT3 + CMP + H(+). It carries out the reaction [alpha-N-acetylneuraminyl-(2-&gt;8)](n)-alpha-N-acetylneuraminyl-(2-&gt;8)-alpha-N-acetylneuraminyl-(2-&gt;3)-beta-D-galactosyl-(1-&gt;4)-beta-D-glucosyl-(1&lt;-&gt;1)-ceramide + CMP-N-acetyl-beta-neuraminate = [alpha-N-acetylneuraminyl-(2-&gt;8)](n+1)-alpha-N-acetylneuraminyl-(2-&gt;8)-alpha-N-acetylneuraminyl-(2-&gt;3)-beta-D-galactosyl-(1-&gt;4)-beta-D-glucosyl-(1&lt;-&gt;1)-ceramide + CMP + H(+). It functions in the pathway protein modification; protein glycosylation. It participates in lipid metabolism; sphingolipid metabolism. Functionally, catalyzes the addition of sialic acid in alpha 2,8-linkage to the sialic acid moiety of the ganglioside GM3 to form ganglioside GD3; gangliosides are a subfamily of complex glycosphingolipds that contain one or more residues of sialic acid. Glycosphingolipids are required for convergence extension movements during early development. Can catalyze the addition of a second alpha-2,8- sialic acid to GD3 to form GT3. Can use GM1b, GD1a and GT1b as acceptor substrates to synthesize GD1c, GT1a and GQ1b respectively. This is Alpha-N-acetylneuraminide alpha-2,8-sialyltransferase from Xenopus tropicalis (Western clawed frog).